Reading from the N-terminus, the 35-residue chain is Beta/delta-theraphotoxin-Pre1a (35 aa).

Intrachain disulfides connect cysteine 3–cysteine 18, cysteine 10–cysteine 23, and cysteine 17–cysteine 30.

It belongs to the neurotoxin 10 (Hwtx-1) family. As to expression, expressed by the venom gland.

It is found in the secreted. Functionally, gating-modifier toxin that both inhibits the peak current of human Nav1.1/SCN1A, rat Nav1.2/SCN2A, human Nav1.6/SCN8A, and human Nav1.7/SCN9A and concurrently inhibits fast inactivation of human Nav1.1 and rat Nav1.3/SCN3A. The relative rank order potency for Nav modulation is Nav1.3 (inactivation EC(50)=45 nM) &gt; Nav1.7 &gt; Nav1.2 &gt; Nav1.1 (inactivation) &gt; Nav1.1 &gt; Nav1.6 &gt; Nav1.3 (IC(50)=8 uM). The DII and DIV S3-S4 loops of Nav channel voltage sensors are important for the interaction of this toxin with Nav channels but cannot account for its unique subtype selectivity. It is the variability of the S1-S2 loops between NaV channels which contributes substantially to the selectivity profile observed for this toxin, particularly with regards to fast inactivation. This toxin may bind the channel in the resting state. This chain is Beta/delta-theraphotoxin-Pre1a, found in Psalmopoeus reduncus (Costa Rican orangemouth tarantula).